The chain runs to 148 residues: Endoribonuclease YbeY (148 aa).

Residues His113, His117, and His123 each contribute to the Zn(2+) site.

It belongs to the endoribonuclease YbeY family. Requires Zn(2+) as cofactor.

It localises to the cytoplasm. Functionally, single strand-specific metallo-endoribonuclease involved in late-stage 70S ribosome quality control and in maturation of the 3' terminus of the 16S rRNA. The sequence is that of Endoribonuclease YbeY from Borrelia hermsii (strain HS1 / DAH).